Here is a 352-residue protein sequence, read N- to C-terminus: Lipid storage droplets surface-binding protein 2 (352 aa).

Disordered stretches follow at residues 1–28 and 298–352; these read MASA…DQPK and NVEQ…VSSQ. Polar residues predominate over residues 298-309; sequence NVEQSGGSSSDA. Low complexity predominate over residues 315–329; sequence TTTSTTTTTTTSSTS.

It belongs to the perilipin family. In terms of tissue distribution, ubiquitous expression in early embryos. At stage 5 expression is restricted to the pole cells. At stage 11 expression is seen in the amnioserosa, refined to the fat body and midgut by stage 14. Also seen in the hindgut by the end of embryogenesis. Expression is seen in larval fat body (at protein level).

The protein resides in the cytoplasm. The protein localises to the lipid droplet. In terms of biological role, essential for embryogenesis. Required for normal deposition of neutral lipids in the oocyte. The sequence is that of Lipid storage droplets surface-binding protein 2 from Drosophila melanogaster (Fruit fly).